The chain runs to 864 residues: Paramyosin (864 aa).

The interval 1–30 (MSSLYRDLDSDVSSTRIVRHSYNVYRGSSP) is nonhelical region. The stretch at 31-853 (SSQNRLESRI…QTVRRSRSMS (823 aa)) forms a coiled coil. A nonhelical region region spans residues 854-864 (VSREVTRVVRV).

Belongs to the paramyosin family. As to quaternary structure, homodimer. In terms of processing, phosphorylated. Most abundantly expressed in muscle tissues from byssus retractor and adductor muscles. Low expression in foot, gill, inner mantle and outer mantle.

The protein resides in the cytoplasm. It is found in the myofibril. In terms of biological role, paramyosin is a major structural component of many thick filaments isolated from invertebrate muscles. The polypeptide is Paramyosin (Mytilus galloprovincialis (Mediterranean mussel)).